The following is a 281-amino-acid chain: MEKIAIITDTTADLTEEFIKENDINVLSFRIIYKDKEYKDKVDITSEEVYRNFEIEVPKSSMPSLQDMEDLYKKLEEEGYTHAIGITLSSGLSGIFNGLKMIADEHSKIKSFIYDSKLISLGEGALVEECSKMIHNNKSFDEIVKAIPEIRKKIHLFFVVGTLDYLKKGGRIGKIAGTIGKLLNIKPIVSVDDNGVYYAYDKVRGRKQSLNRVMEIAKDITKNSKCRAYVMHGDAEKESKEFFKKVKELPNINNAFYNGCISPVSGVHSGPGLVGLVLLEE.

The region spanning 4 to 280 (IAIITDTTAD…PGLVGLVLLE (277 aa)) is the DegV domain. S60 and S93 together coordinate hexadecanoate.

In terms of biological role, may bind long-chain fatty acids, such as palmitate, and may play a role in lipid transport or fatty acid metabolism. The polypeptide is DegV domain-containing protein CA_C0948 (Clostridium acetobutylicum (strain ATCC 824 / DSM 792 / JCM 1419 / IAM 19013 / LMG 5710 / NBRC 13948 / NRRL B-527 / VKM B-1787 / 2291 / W)).